The primary structure comprises 667 residues: Receptor for retinol uptake STRA6 (667 aa).

Over residues Met1–Gly13 the composition is skewed to polar residues. The tract at residues Met1–Ser22 is disordered. The Extracellular portion of the chain corresponds to Met1–Ser50. N-linked (GlcNAc...) asparagine glycosylation is present at Asn8. A helical transmembrane segment spans residues Leu51–Val71. The Cytoplasmic segment spans residues Arg72 to Arg98. Residues Pro99–Pro119 traverse the membrane as a helical segment. Topologically, residues Asp120–Gly144 are extracellular. A helical membrane pass occupies residues Ala145–Ala165. Topologically, residues Thr166 to Gly168 are cytoplasmic. A helical transmembrane segment spans residues His169–Trp189. The Extracellular segment spans residues Gln190–Ser205. A helical transmembrane segment spans residues Leu206–Gln226. Topologically, residues Leu227–Lys295 are cytoplasmic. The tract at residues Thr235–Pro293 is interaction with RBP1. Residues Leu296 to Val316 form a helical membrane-spanning segment. Topologically, residues Gly317–Ile367 are extracellular. A helical transmembrane segment spans residues Ser368–His388. The Cytoplasmic portion of the chain corresponds to Arg389 to Ser422. Residues Phe423 to Phe443 form a helical membrane-spanning segment. Over Leu444–Trp473 the chain is Extracellular. A helical membrane pass occupies residues Pro474 to Phe494. The Cytoplasmic segment spans residues Leu495–Val509. The segment at residues Leu510–Met547 is an intramembrane region (helical). The Cytoplasmic portion of the chain corresponds to Asp548–Pro667. Position 643 is a phosphotyrosine (Tyr643).

Homodimer. Interacts with JAK2 and STAT5. Interacts (via extracellular domains) with RBP4. Interacts (via cytoplasmic domains) with RBP1. Phosphorylated on tyrosine residues in response to RBP4 binding. Phosphorylation requires the presence of LRAT, suggesting it may be triggered by the uptake of retinol that is then metabolized within the cell to retinoids that function as signaling molecules.

The protein resides in the cell membrane. In terms of biological role, functions as a retinol transporter. Accepts all-trans retinol from the extracellular retinol-binding protein RBP4, facilitates retinol transport across the cell membrane, and then transfers retinol to the cytoplasmic retinol-binding protein RBP1. Retinol uptake is enhanced by LRAT, an enzyme that converts retinol to all-trans retinyl esters, the storage forms of vitamin A. Contributes to the activation of a signaling cascade that depends on retinol transport and LRAT-dependent generation of retinol metabolites that then trigger activation of JAK2 and its target STAT5, and ultimately increase the expression of SOCS3 and inhibit cellular responses to insulin. Important for the homeostasis of vitamin A and its derivatives, such as retinoic acid. STRA6-mediated transport is particularly important in the eye, and under conditions of dietary vitamin A deficiency. Does not transport retinoic acid. This Pongo abelii (Sumatran orangutan) protein is Receptor for retinol uptake STRA6 (STRA6).